We begin with the raw amino-acid sequence, 296 residues long: Glycine--tRNA ligase alpha subunit (296 aa).

It belongs to the class-II aminoacyl-tRNA synthetase family. As to quaternary structure, tetramer of two alpha and two beta subunits.

Its subcellular location is the cytoplasm. It carries out the reaction tRNA(Gly) + glycine + ATP = glycyl-tRNA(Gly) + AMP + diphosphate. This chain is Glycine--tRNA ligase alpha subunit, found in Maricaulis maris (strain MCS10) (Caulobacter maris).